A 1076-amino-acid chain; its full sequence is MKPDRDTLDEYFEYDAEEFLVSLALLITEGRTPECSVKGRTESFHCPPAQSCYPVTTKHECSDKLAQCRQARRTRSEVTLLWKNNLPIMVEMMLLPDCCYSDDGPTTEGIDLNDPAIKQDALLLERWILEPVPRQNGDRFIEEKTLLLAVRSFVFFSQLSAWLSVSHGAIPRNILYRISAADVDLQWNFSQTPIEHVFPVPNVSHNVALKVSVQSLPRQSNYPVLTCSIHTNIGLYEKRIQQHKLKTHQHHNPNEAEQCGTNSSQRLCSKQTWTMAPESVLHAKSGPSPEYTAAVKNIKLYPGTGSKSDHGTSQANILGFSGIGDIKSQETSVRTLKSFSMVDSSISNRQSFWQSAGETNPLIGSLIQERQEIIARIAQHLIHCDPSTSHVSGRPFNTQESSSLHSKLFRVSQENENVGKGKEAFSMTFGSPEFSSPEDTNEGKIRLKPETPRSETCISNDFYSHMPVGETNPLIGSLLQERQDVIARIAQHLEHIDPTASHIPRQSFNMHDSSSVASKVFRSSYEDKNLLKKNKDESSVSISHTKCSLLGDISDGKNLVPNKCFTSFKNNSKEKCSLKHQTRNQCQNNPSEIIQSTYQETQNKSSSLSTSSILSQHKENNLDLTSRFKEQEMSNGIDKQYSNCTTIDKQICTNKYKEKIINENYNPKFFGNLQSDDSKKNDSKIKVTVLEMSEYLNKYESMSSNKDSKRPKTCEQNTQLNSIENYLNKDNEGFKCKKSDQLKNEQDKQEDPTNEKSQNYSQRRSIKDCLSTCEQPKNTEVLRTTLKHSNVWRKHNFHSLDGTSTRAFHPQTGLPLLSSPVPQRKTQSGCFDLDSSLLHLKSFSSRSPRPCLNIEDDPDIHEKPFLSSSAPPITSLSLLGNFEESVLNYRFDPLGIVDGFTAEVGASGAFCPTHLTLPVEVSFYSVSDDNAPSPYMGVITLESLGKRGYRVPPSGTIQVTLFNPNKTVVKMFVVIYDLRDMPANHQTFLRQRTFSVPVKQEVKRSVNKENIRHTEERLLRYLIHLRFQSSKSGKIYLHRDVRLLFSRKSMEVDSGAAYELKSYTESPTNPQFSPRC.

The tract at residues 24-32 (ALLITEGRT) is transactivation domain 1 (TAD1). Disordered stretches follow at residues 700 to 721 (ESMS…TQLN) and 739 to 765 (SDQL…QRRS). Over residues 739-754 (SDQLKNEQDKQEDPTN) the composition is skewed to basic and acidic residues. Residues 878–935 (LLGNFEESVLNYRFDPLGIVDGFTAEVGASGAFCPTHLTLPVEVSFYSVSDDNAPSPY) form a required for macropage invasion region. The interval 962–970 (FNPNKTVVK) is transactivation domain 2 (TAD2).

The protein belongs to the ATOS family.

It localises to the nucleus. Functionally, transcription regulator that syncronizes transcriptional and translational programs to promote macrophage invasion of tissues. The protein is Atos homolog protein A of Homo sapiens (Human).